The sequence spans 226 residues: Isoprenyl transferase (226 aa).

D12 is an active-site residue. D12 provides a ligand contact to Mg(2+). Substrate contacts are provided by residues 13–16 (GNAR), W17, K25, H29, and 57–59 (SSE). The Proton acceptor role is filled by N60. Substrate-binding positions include W61, R63, R174, and 180–182 (RIS). Mg(2+) is bound at residue E193.

Belongs to the UPP synthase family. As to quaternary structure, homodimer. It depends on Mg(2+) as a cofactor.

Functionally, catalyzes the condensation of isopentenyl diphosphate (IPP) with allylic pyrophosphates generating different type of terpenoids. The protein is Isoprenyl transferase of Rickettsia sibirica (strain ATCC VR-151 / 246).